The following is a 363-amino-acid chain: 3-dehydroquinate synthase (363 aa).

NAD(+) is bound by residues 134–135 (TT), K147, K156, and 174–177 (TLIT). Zn(2+) contacts are provided by E189, H254, and H271.

It belongs to the sugar phosphate cyclases superfamily. Dehydroquinate synthase family. Requires NAD(+) as cofactor. Co(2+) serves as cofactor. Zn(2+) is required as a cofactor.

The protein resides in the cytoplasm. It catalyses the reaction 7-phospho-2-dehydro-3-deoxy-D-arabino-heptonate = 3-dehydroquinate + phosphate. It functions in the pathway metabolic intermediate biosynthesis; chorismate biosynthesis; chorismate from D-erythrose 4-phosphate and phosphoenolpyruvate: step 2/7. Functionally, catalyzes the conversion of 3-deoxy-D-arabino-heptulosonate 7-phosphate (DAHP) to dehydroquinate (DHQ). The chain is 3-dehydroquinate synthase from Prochlorococcus marinus subsp. pastoris (strain CCMP1986 / NIES-2087 / MED4).